A 115-amino-acid polypeptide reads, in one-letter code: uncharacterized protein (115 aa).

The signal sequence occupies residues 1-20 (MKTFFRTVLFGSLMAVCANS).

This is an uncharacterized protein from Escherichia coli O6:H1 (strain CFT073 / ATCC 700928 / UPEC).